Here is a 420-residue protein sequence, read N- to C-terminus: MDSVNNSSLPPSYTTTGRTYGHCLQMLTCLEPPCTATNGNGISNNRCLKCIVVTMCSIFSIAAHLAITLSCITLIQFIDQKIIYINCTIYAITGFLIAFIVRLTIKSSEVLTSIGKPAQFIFALISSIADTLITRNMLIDSNPSYVKILRAIEMTSLMCFVMLGAFIASYHYVCLATSGDLTWKAGFLILTAGTIIGISAPYGNISSLFGFLFLYTILAINVVRDASKALMNTCYYRICRATTLRHPSRLGCGRMSSTQDVNATHEEAISSADTIDGQIPMVVMSHATGVLIPVVIALQRYMTKKTVSLTSTDMLQGVCGVLVGASVSIFIPSRRDESLSRPIIILLSIIGAMAITLAGFGLVLGPTLFSACAAALSCYTCINIRNANKGIKQLAAAYVVKSILGFIITSLLVCILVALS.

11 helical membrane-spanning segments follow: residues 58–78 (IFSIAAHLAITLSCITLIQFI), 81–101 (KIIYINCTIYAITGFLIAFIV), 114–134 (IGKPAQFIFALISSIADTLIT), 157–177 (LMCFVMLGAFIASYHYVCLAT), 181–201 (LTWKAGFLILTAGTIIGISAP), 203–223 (GNISSLFGFLFLYTILAINVV), 278–298 (QIPMVVMSHATGVLIPVVIAL), 312–332 (TDMLQGVCGVLVGASVSIFIP), 343–363 (IIILLSIIGAMAITLAGFGLV), 364–384 (LGPTLFSACAAALSCYTCINI), and 399–419 (VVKSILGFIITSLLVCILVAL).

This sequence belongs to the alphaherpesvirinae HHV-1 UL43 family.

The protein localises to the host membrane. This chain is Membrane protein UL43 homolog (MDV056), found in Gallus gallus (Chicken).